A 1581-amino-acid chain; its full sequence is Calmodulin-regulated spectrin-associated protein 1 (1581 aa).

In terms of domain architecture, Calponin-homology (CH) spans 215 to 330 (ESPAHQKVRY…FIAELFWWFE (116 aa)). 4 positions are modified to phosphoserine: serine 216, serine 370, serine 374, and serine 415. A disordered region spans residues 351-399 (VLQQKSSRPPVPISNATKRSFLGSPAAMSPADQPPSTQPLAEGSHRYHL). The tract at residues 424–470 (RQKQQKVSQTEEIPDQRHRSNSLTRVDGQPRGAIGAWPDKKNRPVSQ) is disordered. The residue at position 511 (threonine 511) is a Phosphothreonine. 5 positions are modified to phosphoserine: serine 550, serine 553, serine 560, serine 572, and serine 586. Residues 603 to 617 (KQITTKEDERGEGRP) are compositionally biased toward basic and acidic residues. A disordered region spans residues 603-649 (KQITTKEDERGEGRPRTIMAKRPSEGSQPMVRKKVSGGHGSRDLNRT). Phosphoserine is present on residues serine 626, serine 718, serine 724, serine 734, and serine 736. Basic and acidic residues predominate over residues 765–785 (ESAKLQEDMKVKEHEDKDDAS). Disordered regions lie at residues 765–803 (ESAKLQEDMKVKEHEDKDDASGRSSPCLSTTSQLSSMSM) and 821–866 (LNSC…SKDP). 2 stretches are compositionally biased toward low complexity: residues 792-803 (LSTTSQLSSMSM) and 826-837 (TKSSTSSSQKTT). Residues 853–865 (QKREQSPGRHSKD) are compositionally biased toward basic and acidic residues. The sufficient for interaction with SPTBN1 stretch occupies residues 867–888 (ASLLASELVQLHMQLEEKRRAI). Coiled coils occupy residues 869 to 905 (LLASELVQLHMQLEEKRRAIEAQKKKMEALSARQRLK) and 1005 to 1037 (DVNECDLSIEKLNETISTLQQAILKISQQQEQL). Positions 899–918 (SARQRLKLGKAAFLHVVKKG) are sufficient for interaction with calmodulin. Disordered stretches follow at residues 1064 to 1143 (FVEP…ELPE), 1225 to 1251 (PDEDGEVVGHESSVELGGDSDQKPGVG), 1288 to 1315 (QLEAEVELKRDEARRKAEEDRLRKEEEK), and 1332 to 1428 (QALE…DWET). Serine 1069 carries the phosphoserine modification. The span at 1092-1103 (RPAELKVPKDRQ) shows a compositional bias: basic and acidic residues. A compositionally biased stretch (polar residues) spans 1104 to 1132 (QGCSRSKTPTPSVETLPQSRSLPPSTHPR). At serine 1133 the chain carries Phosphoserine. Positions 1225–1237 (PDEDGEVVGHESS) are enriched in basic and acidic residues. Residues 1265 to 1336 (AKKRAAFLLK…RRKQQQALEE (72 aa)) are a coiled coil. Over residues 1342–1353 (PKSKPKKPRPKS) the composition is skewed to basic residues. Residues 1361 to 1372 (SDSGTKCSSTHN) are compositionally biased toward polar residues. Residues 1373-1390 (LSQTHSGSSLSLASAATT) are compositionally biased toward low complexity. Residues serine 1378 and serine 1407 each carry the phosphoserine modification. The CKK domain occupies 1443–1576 (GPKLFKEPSS…QPKRPTVPKK (134 aa)). Tyrosine 1516 is subject to Phosphotyrosine.

The protein belongs to the CAMSAP1 family. In terms of assembly, interacts with spectrin via SPTBN1; the interaction is direct. Interacts with calmodulin; calcium-dependent it prevents interaction with spectrin. In terms of tissue distribution, expressed in the central nervous system.

It localises to the cytoplasm. Its subcellular location is the cytoskeleton. Functionally, key microtubule-organizing protein that specifically binds the minus-end of non-centrosomal microtubules and regulates their dynamics and organization. Specifically recognizes growing microtubule minus-ends and stabilizes microtubules. Acts on free microtubule minus-ends that are not capped by microtubule-nucleating proteins or other factors and protects microtubule minus-ends from depolymerization. In contrast to CAMSAP2 and CAMSAP3, tracks along the growing tips of minus-end microtubules without significantly affecting the polymerization rate: binds at the very tip of the microtubules minus-end and acts as a minus-end tracking protein (-TIP) that dissociates from microtubules after allowing tubulin incorporation. Through interaction with spectrin may regulate neurite outgrowth. This chain is Calmodulin-regulated spectrin-associated protein 1 (Camsap1), found in Mus musculus (Mouse).